The primary structure comprises 193 residues: Putative 3-methyladenine DNA glycosylase (193 aa).

This sequence belongs to the DNA glycosylase MPG family.

The chain is Putative 3-methyladenine DNA glycosylase from Francisella tularensis subsp. holarctica (strain FTNF002-00 / FTA).